The sequence spans 89 residues: Small ribosomal subunit protein uS15 (89 aa).

Belongs to the universal ribosomal protein uS15 family. In terms of assembly, part of the 30S ribosomal subunit. Forms a bridge to the 50S subunit in the 70S ribosome, contacting the 23S rRNA.

Functionally, one of the primary rRNA binding proteins, it binds directly to 16S rRNA where it helps nucleate assembly of the platform of the 30S subunit by binding and bridging several RNA helices of the 16S rRNA. In terms of biological role, forms an intersubunit bridge (bridge B4) with the 23S rRNA of the 50S subunit in the ribosome. This chain is Small ribosomal subunit protein uS15, found in Chlamydia caviae (strain ATCC VR-813 / DSM 19441 / 03DC25 / GPIC) (Chlamydophila caviae).